Consider the following 242-residue polypeptide: Probable transcriptional regulatory protein lhv_0777 (242 aa).

The segment at 1–22 (MSGHSKWHNIQGRKNAQDAKRG) is disordered.

It belongs to the TACO1 family.

It localises to the cytoplasm. The protein is Probable transcriptional regulatory protein lhv_0777 of Lactobacillus helveticus (strain DPC 4571).